The chain runs to 215 residues: Protein-L-isoaspartate O-methyltransferase (215 aa).

Residue Ser62 is part of the active site.

Belongs to the methyltransferase superfamily. L-isoaspartyl/D-aspartyl protein methyltransferase family.

The protein resides in the cytoplasm. The enzyme catalyses [protein]-L-isoaspartate + S-adenosyl-L-methionine = [protein]-L-isoaspartate alpha-methyl ester + S-adenosyl-L-homocysteine. Catalyzes the methyl esterification of L-isoaspartyl residues in peptides and proteins that result from spontaneous decomposition of normal L-aspartyl and L-asparaginyl residues. It plays a role in the repair and/or degradation of damaged proteins. The protein is Protein-L-isoaspartate O-methyltransferase of Nitratidesulfovibrio vulgaris (strain DSM 19637 / Miyazaki F) (Desulfovibrio vulgaris).